A 429-amino-acid polypeptide reads, in one-letter code: Glutamate-1-semialdehyde 2,1-aminomutase (429 aa).

The residue at position 265 (lysine 265) is an N6-(pyridoxal phosphate)lysine.

Belongs to the class-III pyridoxal-phosphate-dependent aminotransferase family. HemL subfamily. In terms of assembly, homodimer. Pyridoxal 5'-phosphate is required as a cofactor.

The protein localises to the cytoplasm. It catalyses the reaction (S)-4-amino-5-oxopentanoate = 5-aminolevulinate. It functions in the pathway porphyrin-containing compound metabolism; protoporphyrin-IX biosynthesis; 5-aminolevulinate from L-glutamyl-tRNA(Glu): step 2/2. In Azotobacter vinelandii (strain DJ / ATCC BAA-1303), this protein is Glutamate-1-semialdehyde 2,1-aminomutase.